The sequence spans 134 residues: ATP synthase epsilon chain (134 aa).

The protein belongs to the ATPase epsilon chain family. As to quaternary structure, F-type ATPases have 2 components, CF(1) - the catalytic core - and CF(0) - the membrane proton channel. CF(1) has five subunits: alpha(3), beta(3), gamma(1), delta(1), epsilon(1). CF(0) has three main subunits: a, b and c.

It is found in the cell inner membrane. Functionally, produces ATP from ADP in the presence of a proton gradient across the membrane. This chain is ATP synthase epsilon chain, found in Rhodospirillum rubrum (strain ATCC 11170 / ATH 1.1.1 / DSM 467 / LMG 4362 / NCIMB 8255 / S1).